An 89-amino-acid chain; its full sequence is UPF0223 protein BCG9842_B1176 (89 aa).

The protein belongs to the UPF0223 family.

The polypeptide is UPF0223 protein BCG9842_B1176 (Bacillus cereus (strain G9842)).